Here is a 112-residue protein sequence, read N- to C-terminus: Large ribosomal subunit protein bL17 (112 aa).

It belongs to the bacterial ribosomal protein bL17 family. In terms of assembly, part of the 50S ribosomal subunit. Contacts protein L32.

The polypeptide is Large ribosomal subunit protein bL17 (Caldanaerobacter subterraneus subsp. tengcongensis (strain DSM 15242 / JCM 11007 / NBRC 100824 / MB4) (Thermoanaerobacter tengcongensis)).